A 115-amino-acid polypeptide reads, in one-letter code: Class I hydrophobin 21 (115 aa).

A signal peptide spans 1–20 (MFAAPATMLVLAALAALSSA). Cystine bridges form between Cys-30-Cys-93, Cys-37-Cys-87, Cys-38-Cys-77, and Cys-94-Cys-107.

The protein belongs to the fungal hydrophobin family. Self-assembles to form functional amyloid fibrils called rodlets. Self-assembly into fibrillar rodlets occurs spontaneously at hydrophobic:hydrophilic interfaces and the rodlets further associate laterally to form amphipathic monolayers.

Its subcellular location is the secreted. It is found in the cell wall. Its function is as follows. Aerial growth, conidiation, and dispersal of filamentous fungi in the environment rely upon a capability of their secreting small amphipathic proteins called hydrophobins (HPBs) with low sequence identity. Class I can self-assemble into an outermost layer of rodlet bundles on aerial cell surfaces, conferring cellular hydrophobicity that supports fungal growth, development and dispersal; whereas Class II form highly ordered films at water-air interfaces through intermolecular interactions but contribute nothing to the rodlet structure. This chain is Class I hydrophobin 21, found in Pleurotus ostreatus (strain PC15) (Oyster mushroom).